The chain runs to 250 residues: DNA repair protein RecO (250 aa).

Belongs to the RecO family.

In terms of biological role, involved in DNA repair and RecF pathway recombination. This Thermodesulfovibrio yellowstonii (strain ATCC 51303 / DSM 11347 / YP87) protein is DNA repair protein RecO.